The primary structure comprises 459 residues: Transcription factor AP-2-beta (459 aa).

A Glycyl lysine isopeptide (Lys-Gly) (interchain with G-Cter in SUMO) cross-link involves residue Lys-21. The segment at 30 to 139 (HDGVPSHSSR…PQLSGLDPRR (110 aa)) is disordered. Polar residues predominate over residues 35-51 (SHSSRLSQLGSVSQGPY). The segment covering 121–132 (LLPQPRAALPQL) has biased composition (low complexity). Position 258 is a phosphoserine; by PKA (Ser-258). Positions 299–429 (RRKAANVTLL…YLTEALKGMD (131 aa)) are H-S-H (helix-span-helix), dimerization. The tract at residues 435–459 (NTTNRHTSGEGPGSKTGDKEEKHRK) is disordered. Residues 450–459 (TGDKEEKHRK) are compositionally biased toward basic and acidic residues.

The protein belongs to the AP-2 family. In terms of assembly, binds DNA as a dimer. Can form homodimers or heterodimers with other AP-2 family members. Interacts with CITED4. Interacts with UBE2I. Interacts with KCTD1; this interaction represses transcription activation. Interacts with CITED2 (via C-terminus); the interaction stimulates TFAP2B-transcriptional activity. In terms of processing, sumoylated. Sumoylated on Lys-21; which inhibits transcriptional activity. Localizes to neurons in areas of the cerebral cortex, cerebellum and hypothalamus (at protein level).

It is found in the nucleus. Functionally, sequence-specific DNA-binding protein that interacts with inducible viral and cellular enhancer elements to regulate transcription of selected genes. AP-2 factors bind to the consensus sequence 5'-GCCNNNGGC-3' and activate genes involved in a large spectrum of important biological functions including proper eye, face, body wall, limb and neural tube development. They also suppress a number of genes including MCAM/MUC18, C/EBP alpha and MYC. AP-2-beta appears to be required for normal face and limb development and for proper terminal differentiation and function of renal tubular epithelia. This is Transcription factor AP-2-beta (Tfap2b) from Mus musculus (Mouse).